The following is a 269-amino-acid chain: Formamidopyrimidine-DNA glycosylase (269 aa).

Catalysis depends on P2, which acts as the Schiff-base intermediate with DNA. E3 (proton donor) is an active-site residue. K57 (proton donor; for beta-elimination activity) is an active-site residue. 3 residues coordinate DNA: H90, R109, and K150. An FPG-type zinc finger spans residues 235-269 (FVYGRAGEPCRICGEQIESIKLGQRSTFFCRHCQY). R259 (proton donor; for delta-elimination activity) is an active-site residue.

It belongs to the FPG family. Monomer. Zn(2+) is required as a cofactor.

It carries out the reaction Hydrolysis of DNA containing ring-opened 7-methylguanine residues, releasing 2,6-diamino-4-hydroxy-5-(N-methyl)formamidopyrimidine.. It catalyses the reaction 2'-deoxyribonucleotide-(2'-deoxyribose 5'-phosphate)-2'-deoxyribonucleotide-DNA = a 3'-end 2'-deoxyribonucleotide-(2,3-dehydro-2,3-deoxyribose 5'-phosphate)-DNA + a 5'-end 5'-phospho-2'-deoxyribonucleoside-DNA + H(+). Its function is as follows. Involved in base excision repair of DNA damaged by oxidation or by mutagenic agents. Acts as a DNA glycosylase that recognizes and removes damaged bases. Has a preference for oxidized purines, such as 7,8-dihydro-8-oxoguanine (8-oxoG). Has AP (apurinic/apyrimidinic) lyase activity and introduces nicks in the DNA strand. Cleaves the DNA backbone by beta-delta elimination to generate a single-strand break at the site of the removed base with both 3'- and 5'-phosphates. The protein is Formamidopyrimidine-DNA glycosylase of Photorhabdus laumondii subsp. laumondii (strain DSM 15139 / CIP 105565 / TT01) (Photorhabdus luminescens subsp. laumondii).